The chain runs to 684 residues: TBC1 domain family member 23 (684 aa).

The Rab-GAP TBC domain occupies 44 to 225 (PLPAELRAKV…AIWDGYLQQA (182 aa)). Ser300 is subject to Phosphoserine. The 113-residue stretch at 334 to 446 (EGVRFFVVDC…LQQHLADINV (113 aa)) folds into the Rhodanese domain. Residues Ser469, Ser474, and Ser507 each carry the phosphoserine modification. Thr514 is modified (phosphothreonine). Positions 514-558 (TPVDRHVSSSDRVGKPYRGVKPVFSIGDEEEYDTDEIDSSSMSDD) are may mediate the interaction with C17orf75, FAM91A1 and WDR11. Residues 514-684 (TPVDRHVSSS…IMKVLDALES (171 aa)) form a may mediate the interaction with WASHC1 region. Ser556 is modified (phosphoserine). The interval 559 to 684 (DRKEVVNIQT…IMKVLDALES (126 aa)) is may mediate the interaction with FKBP15 and WASHC2; required for endosome to Golgi trafficking.

In terms of assembly, directly interacts with GOLGA1 and GOLGA4. Interacts with FAM91A1, C17ORF75 and WDR11; the interaction recruits TBC1D23 to AP-1-derived vesicles. Directly interacts with WASHC1 and WASHC2/FAM21. Interacts with FKBP15.

It localises to the golgi apparatus. The protein resides in the trans-Golgi network. The protein localises to the cytoplasmic vesicle. Its function is as follows. Putative Rab GTPase-activating protein which plays a role in vesicular trafficking. Involved in endosome-to-Golgi trafficking. Acts as a bridging protein by binding simultaneously to golgins, including GOLGA1 and GOLGA4, located at the trans-Golgi, and to the WASH complex, located on endosome-derived vesicles. Together with WDR11 complex facilitates the golgin-mediated capture of vesicles generated using AP-1. Plays a role in brain development, including in cortical neuron positioning. May also be important for neurite outgrowth, possibly through its involvement in membrane trafficking and cargo delivery, 2 processes which are essential for axonal and dendritic growth. May act as a general inhibitor of innate immunity signaling, strongly inhibiting multiple TLR and dectin/CLEC7A-signaling pathways. Does not alter initial activation events, but instead affects maintenance of inflammatory gene expression several hours after bacterial lipopolysaccharide (LPS) challenge. The sequence is that of TBC1 domain family member 23 (Tbc1d23) from Mus musculus (Mouse).